We begin with the raw amino-acid sequence, 316 residues long: Probable 5-dehydro-4-deoxyglucarate dehydratase (316 aa).

It belongs to the DapA family.

It catalyses the reaction 5-dehydro-4-deoxy-D-glucarate + H(+) = 2,5-dioxopentanoate + CO2 + H2O. It functions in the pathway carbohydrate acid metabolism; D-glucarate degradation; 2,5-dioxopentanoate from D-glucarate: step 2/2. The sequence is that of Probable 5-dehydro-4-deoxyglucarate dehydratase from Corynebacterium glutamicum (strain ATCC 13032 / DSM 20300 / JCM 1318 / BCRC 11384 / CCUG 27702 / LMG 3730 / NBRC 12168 / NCIMB 10025 / NRRL B-2784 / 534).